Here is a 432-residue protein sequence, read N- to C-terminus: Enolase (432 aa).

Gln-167 lines the (2R)-2-phosphoglycerate pocket. Glu-209 (proton donor) is an active-site residue. Mg(2+)-binding residues include Asp-246, Glu-290, and Asp-317. Residues Lys-342, Arg-371, Ser-372, and Lys-393 each contribute to the (2R)-2-phosphoglycerate site. Lys-342 (proton acceptor) is an active-site residue.

Belongs to the enolase family. In terms of assembly, component of the RNA degradosome, a multiprotein complex involved in RNA processing and mRNA degradation. The cofactor is Mg(2+).

It localises to the cytoplasm. The protein resides in the secreted. Its subcellular location is the cell surface. The catalysed reaction is (2R)-2-phosphoglycerate = phosphoenolpyruvate + H2O. It functions in the pathway carbohydrate degradation; glycolysis; pyruvate from D-glyceraldehyde 3-phosphate: step 4/5. Functionally, catalyzes the reversible conversion of 2-phosphoglycerate (2-PG) into phosphoenolpyruvate (PEP). It is essential for the degradation of carbohydrates via glycolysis. The chain is Enolase from Klebsiella pneumoniae subsp. pneumoniae (strain ATCC 700721 / MGH 78578).